A 341-amino-acid polypeptide reads, in one-letter code: tRNA N6-adenosine threonylcarbamoyltransferase (341 aa).

Residues H115 and H119 each contribute to the Fe cation site. Substrate-binding positions include 138–142 (LVSGG), D171, G184, and N276. D304 serves as a coordination point for Fe cation.

The protein belongs to the KAE1 / TsaD family. The cofactor is Fe(2+).

It is found in the cytoplasm. It carries out the reaction L-threonylcarbamoyladenylate + adenosine(37) in tRNA = N(6)-L-threonylcarbamoyladenosine(37) in tRNA + AMP + H(+). In terms of biological role, required for the formation of a threonylcarbamoyl group on adenosine at position 37 (t(6)A37) in tRNAs that read codons beginning with adenine. Is involved in the transfer of the threonylcarbamoyl moiety of threonylcarbamoyl-AMP (TC-AMP) to the N6 group of A37, together with TsaE and TsaB. TsaD likely plays a direct catalytic role in this reaction. This chain is tRNA N6-adenosine threonylcarbamoyltransferase, found in Stenotrophomonas maltophilia (strain R551-3).